The chain runs to 767 residues: Syn-copalyl diphosphate synthase (767 aa).

The segment at glycine 45–aspartate 74 is disordered. Over residues glutamate 59–aspartate 74 the composition is skewed to basic and acidic residues. Lysine 233 contacts substrate. The Mg(2+) site is built by aspartate 365 and aspartate 367. A DXDD motif motif is present at residues aspartate 365–aspartate 368. Lysine 453 is a binding site for substrate.

Mg(2+) serves as cofactor.

The catalysed reaction is (2E,6E,10E)-geranylgeranyl diphosphate = 9alpha-copalyl diphosphate. Functionally, catalyzes the conversion of geranylgeranyl diphosphate to the phytoalexin precursor syn-copalyl diphosphate. This is Syn-copalyl diphosphate synthase (CPS4) from Oryza sativa subsp. indica (Rice).